A 74-amino-acid polypeptide reads, in one-letter code: Large ribosomal subunit protein bL31 (74 aa).

The protein belongs to the bacterial ribosomal protein bL31 family. Type A subfamily. In terms of assembly, part of the 50S ribosomal subunit.

Binds the 23S rRNA. This chain is Large ribosomal subunit protein bL31, found in Afipia carboxidovorans (strain ATCC 49405 / DSM 1227 / KCTC 32145 / OM5) (Oligotropha carboxidovorans).